The following is a 304-amino-acid chain: Proteasome subunit beta (304 aa).

Residues 1 to 65 (MTWPHFEQLA…LTPTDAVPHG (65 aa)) constitute a propeptide, removed in mature form; by autocatalysis. Thr-66 acts as the Nucleophile in catalysis.

It belongs to the peptidase T1B family. In terms of assembly, the 20S proteasome core is composed of 14 alpha and 14 beta subunits that assemble into four stacked heptameric rings, resulting in a barrel-shaped structure. The two inner rings, each composed of seven catalytic beta subunits, are sandwiched by two outer rings, each composed of seven alpha subunits. The catalytic chamber with the active sites is on the inside of the barrel. Has a gated structure, the ends of the cylinder being occluded by the N-termini of the alpha-subunits. Is capped by the proteasome-associated ATPase, ARC.

The protein resides in the cytoplasm. It catalyses the reaction Cleavage of peptide bonds with very broad specificity.. It functions in the pathway protein degradation; proteasomal Pup-dependent pathway. Its activity is regulated as follows. The formation of the proteasomal ATPase ARC-20S proteasome complex, likely via the docking of the C-termini of ARC into the intersubunit pockets in the alpha-rings, may trigger opening of the gate for substrate entry. Interconversion between the open-gate and close-gate conformations leads to a dynamic regulation of the 20S proteasome proteolysis activity. Component of the proteasome core, a large protease complex with broad specificity involved in protein degradation. The polypeptide is Proteasome subunit beta (Mycobacterium sp. (strain JLS)).